Reading from the N-terminus, the 169-residue chain is tRNA (cytidine(56)-2'-O)-methyltransferase (169 aa).

Residues leucine 77, 103-107 (GSEKV), and 121-128 (IGNQPHSE) each bind S-adenosyl-L-methionine.

Belongs to the aTrm56 family. In terms of assembly, homodimer.

The protein resides in the cytoplasm. The enzyme catalyses cytidine(56) in tRNA + S-adenosyl-L-methionine = 2'-O-methylcytidine(56) in tRNA + S-adenosyl-L-homocysteine + H(+). In terms of biological role, specifically catalyzes the AdoMet-dependent 2'-O-ribose methylation of cytidine at position 56 in tRNAs. The chain is tRNA (cytidine(56)-2'-O)-methyltransferase from Sulfurisphaera tokodaii (strain DSM 16993 / JCM 10545 / NBRC 100140 / 7) (Sulfolobus tokodaii).